Here is a 206-residue protein sequence, read N- to C-terminus: Nucleoside triphosphate pyrophosphatase (206 aa).

Catalysis depends on Asp76, which acts as the Proton acceptor.

Belongs to the Maf family. It depends on a divalent metal cation as a cofactor.

The protein resides in the cytoplasm. The enzyme catalyses a ribonucleoside 5'-triphosphate + H2O = a ribonucleoside 5'-phosphate + diphosphate + H(+). It carries out the reaction a 2'-deoxyribonucleoside 5'-triphosphate + H2O = a 2'-deoxyribonucleoside 5'-phosphate + diphosphate + H(+). In terms of biological role, nucleoside triphosphate pyrophosphatase. May have a dual role in cell division arrest and in preventing the incorporation of modified nucleotides into cellular nucleic acids. This Streptomyces avermitilis (strain ATCC 31267 / DSM 46492 / JCM 5070 / NBRC 14893 / NCIMB 12804 / NRRL 8165 / MA-4680) protein is Nucleoside triphosphate pyrophosphatase.